The following is a 429-amino-acid chain: 3-phosphoshikimate 1-carboxyvinyltransferase (429 aa).

Residues Lys22, Ser23, and Arg27 each coordinate 3-phosphoshikimate. Lys22 serves as a coordination point for phosphoenolpyruvate. Positions 94 and 122 each coordinate phosphoenolpyruvate. 4 residues coordinate 3-phosphoshikimate: Ser167, Gln169, Asp315, and Lys342. Gln169 contributes to the phosphoenolpyruvate binding site. The Proton acceptor role is filled by Asp315. Positions 346 and 388 each coordinate phosphoenolpyruvate.

The protein belongs to the EPSP synthase family. As to quaternary structure, monomer.

The protein resides in the cytoplasm. The catalysed reaction is 3-phosphoshikimate + phosphoenolpyruvate = 5-O-(1-carboxyvinyl)-3-phosphoshikimate + phosphate. It participates in metabolic intermediate biosynthesis; chorismate biosynthesis; chorismate from D-erythrose 4-phosphate and phosphoenolpyruvate: step 6/7. Catalyzes the transfer of the enolpyruvyl moiety of phosphoenolpyruvate (PEP) to the 5-hydroxyl of shikimate-3-phosphate (S3P) to produce enolpyruvyl shikimate-3-phosphate and inorganic phosphate. In Geotalea daltonii (strain DSM 22248 / JCM 15807 / FRC-32) (Geobacter daltonii), this protein is 3-phosphoshikimate 1-carboxyvinyltransferase.